Here is a 521-residue protein sequence, read N- to C-terminus: Probable protein kinase UbiB (521 aa).

The Protein kinase domain maps to 119–497; that stretch reads SFDRQPVASA…QKRTNRLLQS (379 aa). ATP is bound by residues 125-133 and K151; that span reads VASASIAQV. D286 functions as the Proton acceptor in the catalytic mechanism. The chain crosses the membrane as a helical span at residues 496–516; sequence QSLIYGGLGFVLGLLVMQLFV.

This sequence belongs to the ABC1 family. UbiB subfamily.

Its subcellular location is the cell inner membrane. It functions in the pathway cofactor biosynthesis; ubiquinone biosynthesis [regulation]. Functionally, is probably a protein kinase regulator of UbiI activity which is involved in aerobic coenzyme Q (ubiquinone) biosynthesis. This Acidovorax sp. (strain JS42) protein is Probable protein kinase UbiB.